Consider the following 131-residue polypeptide: uncharacterized protein (131 aa).

This is an uncharacterized protein from Rickettsia conorii (strain ATCC VR-613 / Malish 7).